The primary structure comprises 228 residues: MSPSLTWHDVIGQEKEQPYFKDTLAYVAAERRAGKTIYPPQKDIFNAFRLTELDQVKVVILGQDPYHGPNQAHGLSFSVLPGVPAPPSLGNIYKELVTDIPGFQRPNHGFLQSWAEQGVLLLNTVLTVEAGKAHSHANLGWETFTDKVIAALNEHREGVIFMLWGSHAQKKGRIINTERHYILKAPHPSPLSAHRGFLGCKHFSQANQLLQQQNQQPIDWQPKLPAVE.

The active-site Proton acceptor is Asp64.

It belongs to the uracil-DNA glycosylase (UDG) superfamily. UNG family.

It is found in the cytoplasm. The enzyme catalyses Hydrolyzes single-stranded DNA or mismatched double-stranded DNA and polynucleotides, releasing free uracil.. Its function is as follows. Excises uracil residues from the DNA which can arise as a result of misincorporation of dUMP residues by DNA polymerase or due to deamination of cytosine. The protein is Uracil-DNA glycosylase of Yersinia pestis bv. Antiqua (strain Antiqua).